Reading from the N-terminus, the 363-residue chain is Pyrimidine monooxygenase RutA (363 aa).

Residues 49–50 (IK), N115, E124, 140–141 (RY), and S190 contribute to the FMN site.

The protein belongs to the NtaA/SnaA/DszA monooxygenase family. RutA subfamily.

It catalyses the reaction uracil + FMNH2 + NADH + O2 = (Z)-3-ureidoacrylate + FMN + NAD(+) + H2O + H(+). It carries out the reaction thymine + FMNH2 + NADH + O2 = (Z)-2-methylureidoacrylate + FMN + NAD(+) + H2O + H(+). Its function is as follows. Catalyzes the pyrimidine ring opening between N-3 and C-4 by an unusual flavin hydroperoxide-catalyzed mechanism, adding oxygen atoms in the process to yield ureidoacrylate peracid, that immediately reacts with FMN forming ureidoacrylate and FMN-N(5)-oxide. The FMN-N(5)-oxide reacts spontaneously with NADH to produce FMN. Requires the flavin reductase RutF to regenerate FMN in vivo. The polypeptide is Pyrimidine monooxygenase RutA (Enterobacter sp. (strain 638)).